The following is a 376-amino-acid chain: Ribonucleoside-diphosphate reductase subunit beta (376 aa).

The Fe cation site is built by D85, E116, and H119. The active site involves Y123. E205, E239, and H242 together coordinate Fe cation.

Belongs to the ribonucleoside diphosphate reductase small chain family. Tetramer of two alpha and two beta subunits. Requires Fe cation as cofactor.

The enzyme catalyses a 2'-deoxyribonucleoside 5'-diphosphate + [thioredoxin]-disulfide + H2O = a ribonucleoside 5'-diphosphate + [thioredoxin]-dithiol. Functionally, provides the precursors necessary for DNA synthesis. Catalyzes the biosynthesis of deoxyribonucleotides from the corresponding ribonucleotides. The polypeptide is Ribonucleoside-diphosphate reductase subunit beta (nrdB) (Buchnera aphidicola subsp. Baizongia pistaciae (strain Bp)).